A 132-amino-acid chain; its full sequence is Small ribosomal subunit protein uS11 (132 aa).

It belongs to the universal ribosomal protein uS11 family. Part of the 30S ribosomal subunit. Interacts with proteins S7 and S18. Binds to IF-3.

Located on the platform of the 30S subunit, it bridges several disparate RNA helices of the 16S rRNA. Forms part of the Shine-Dalgarno cleft in the 70S ribosome. The protein is Small ribosomal subunit protein uS11 of Lachnoclostridium phytofermentans (strain ATCC 700394 / DSM 18823 / ISDg) (Clostridium phytofermentans).